The following is a 334-amino-acid chain: Phospho-N-acetylmuramoyl-pentapeptide-transferase (334 aa).

A run of 10 helical transmembrane segments spans residues 2-22 (IPVL…GPVV), 55-75 (VIFL…PGGV), 78-98 (GWIE…LGFM), 116-136 (EKLL…VFVL), 154-174 (GLAL…VVLA), 187-207 (GLAA…ALVM), 211-231 (WVGI…CYNF), 236-256 (VFMG…AAVI), 262-282 (FLLI…IQVI), and 311-331 (VVLT…AGLK).

This sequence belongs to the glycosyltransferase 4 family. MraY subfamily. The cofactor is Mg(2+).

Its subcellular location is the cell membrane. The enzyme catalyses UDP-N-acetyl-alpha-D-muramoyl-L-alanyl-gamma-D-glutamyl-meso-2,6-diaminopimeloyl-D-alanyl-D-alanine + di-trans,octa-cis-undecaprenyl phosphate = di-trans,octa-cis-undecaprenyl diphospho-N-acetyl-alpha-D-muramoyl-L-alanyl-D-glutamyl-meso-2,6-diaminopimeloyl-D-alanyl-D-alanine + UMP. It participates in cell wall biogenesis; peptidoglycan biosynthesis. In terms of biological role, catalyzes the initial step of the lipid cycle reactions in the biosynthesis of the cell wall peptidoglycan: transfers peptidoglycan precursor phospho-MurNAc-pentapeptide from UDP-MurNAc-pentapeptide onto the lipid carrier undecaprenyl phosphate, yielding undecaprenyl-pyrophosphoryl-MurNAc-pentapeptide, known as lipid I. The polypeptide is Phospho-N-acetylmuramoyl-pentapeptide-transferase (Desulforudis audaxviator (strain MP104C)).